The primary structure comprises 475 residues: MSPQTETKAGVGFKAGVKDYRLTYYTPEYKTKDTDILAAFRMTPQPGVPAEEAGAAVAAESSTGTWTTVWTDGLTSLDRYKGRCYDIEPVAGEENQYIAYVAYPLDLFEEGSVTNMLTSIVGNVFGFKALRALRLEDLRIPPAYSKTFLGPPHGIQVERDKLNKYGRPLLGCTIKPKLGLSAKNYGRAVYECLRGGLDFTKDDENVNSQPFMRWRDRFLFVAEALFKSQAETGEIKGHYLNATAGTCEEMMKRAVFARELGAPIVMHDYLTGGFTANTSLAFYCRDNGLLLHIHRAMHAVIDRQKNHGIHFRVLAKALRMSGGDHIHAGTVVGKLEGEREVTLGFVDLLRDDYIEKDRSRGIYFTQDWVSMPGVFPVASGGIHVWHMPALTEIFGDDSVLQFGGGTLGHPWGNAPGAVANRVALEACVQARNEGRDLAREGNEIIREASKWSPELAAACEIWKAIKFEFETIDTL.

Positions Met1–Ser2 are excised as a propeptide. Pro3 carries the N-acetylproline modification. At Lys14 the chain carries N6,N6,N6-trimethyllysine. 2 residues coordinate substrate: Asn123 and Thr173. Lys175 functions as the Proton acceptor in the catalytic mechanism. Lys177 contacts substrate. Positions 201, 203, and 204 each coordinate Mg(2+). Lys201 carries the N6-carboxylysine modification. Catalysis depends on His294, which acts as the Proton acceptor. Substrate-binding residues include Arg295, His327, and Ser379.

The protein belongs to the RuBisCO large chain family. Type I subfamily. As to quaternary structure, heterohexadecamer of 8 large chains and 8 small chains; disulfide-linked. The disulfide link is formed within the large subunit homodimers. The cofactor is Mg(2+). The disulfide bond which can form in the large chain dimeric partners within the hexadecamer appears to be associated with oxidative stress and protein turnover.

The protein resides in the plastid. It localises to the chloroplast. It catalyses the reaction 2 (2R)-3-phosphoglycerate + 2 H(+) = D-ribulose 1,5-bisphosphate + CO2 + H2O. The catalysed reaction is D-ribulose 1,5-bisphosphate + O2 = 2-phosphoglycolate + (2R)-3-phosphoglycerate + 2 H(+). RuBisCO catalyzes two reactions: the carboxylation of D-ribulose 1,5-bisphosphate, the primary event in carbon dioxide fixation, as well as the oxidative fragmentation of the pentose substrate in the photorespiration process. Both reactions occur simultaneously and in competition at the same active site. The sequence is that of Ribulose bisphosphate carboxylase large chain from Adiantum capillus-veneris (Maidenhair fern).